A 696-amino-acid polypeptide reads, in one-letter code: MKFAEHLSAHITPEWRKQYIQYEAFKDMLYSAQDQAPSVEVTDEDTVKRYFAKFEEKFFQTCEKELAKINTFYSEKLAEAQRRFATLQNELQSSLDAQKESTGVTTLRQRRKPVFHLSHEERVQHRNIKDLKLAFSEFYLSLILLQNYQNLNFTGFRKILKKHDKILETSRGADWRVAHVEVAPFYTCKKINQLISETEAVVTNELEDGDRQKAMKRLRVPPLGAAQPAPAWTTFRVGLFCGIFIVLNITLVLAAVFKLETDRSIWPLIRIYRGGFLLIEFLFLLGINTYGWRQAGVNHVLIFELNPRSNLSHQHLFEIAGFLGILWCLSLLACFFAPISVIPTYVYPLALYGFMVFFLINPTKTFYYKSRFWLLKLLFRVFTAPFHKVGFADFWLADQLNSLSVILMDLEYMICFYSLELKWDESKGLLPNNSEESGICHKYTYGVRAIVQCIPAWLRFIQCLRRYRDTKRAFPHLVNAGKYSTTFFMVTFAALYSTHKERGHSDTMVFFYLWIVFYIISSCYTLIWDLKMDWGLFDKNAGENTFLREEIVYPQKAYYYCAIIEDVILRFAWTIQISITSTTLLPHSGDIIATVFAPLEVFRRFVWNFFRLENEHLNNCGEFRAVRDISVAPLNADDQTLLEQMMDQDDGVRNRQKNRSWKYNQSISLRRPRLASQSKARDTKVLIEDTDDEANT.

Topologically, residues 1-228 (MKFAEHLSAH…RVPPLGAAQP (228 aa)) are cytoplasmic. Positions 2–224 (KFAEHLSAHI…MKRLRVPPLG (223 aa)) constitute an SPX domain. The interval 158–165 (KILKKHDK) is important for inositol polyphosphate binding. A helical membrane pass occupies residues 229–259 (APAWTTFRVGLFCGIFIVLNITLVLAAVFKL). The Extracellular segment spans residues 260–264 (ETDRS). A helical membrane pass occupies residues 265 to 296 (IWPLIRIYRGGFLLIEFLFLLGINTYGWRQAG). Over 297–309 (VNHVLIFELNPRS) the chain is Cytoplasmic. The helical transmembrane segment at 310–337 (NLSHQHLFEIAGFLGILWCLSLLACFFA) threads the bilayer. Topologically, residues 338 to 343 (PISVIP) are extracellular. A helical membrane pass occupies residues 344–365 (TYVYPLALYGFMVFFLINPTKT). Residues 366-383 (FYYKSRFWLLKLLFRVFT) constitute an intramembrane region (helical). The Cytoplasmic segment spans residues 384-388 (APFHK). A discontinuously helical membrane pass occupies residues 389 to 422 (VGFADFWLADQLNSLSVILMDLEYMICFYSLELK). Residues Asp398 and Asn401 each coordinate phosphate. Over 423-429 (WDESKGL) the chain is Extracellular. A discontinuously helical transmembrane segment spans residues 430–471 (LPNNSEESGICHKYTYGVRAIVQCIPAWLRFIQCLRRYRDTK). An EXS domain is found at 439–643 (ICHKYTYGVR…LNADDQTLLE (205 aa)). Residue Arg472 is a topological domain, cytoplasmic. A helical membrane pass occupies residues 473 to 503 (AFPHLVNAGKYSTTFFMVTFAALYSTHKERG). Residues Lys482 and Tyr483 each coordinate phosphate. The Extracellular portion of the chain corresponds to 504–506 (HSD). A helical membrane pass occupies residues 507–534 (TMVFFYLWIVFYIISSCYTLIWDLKMDW). Residues 535 to 553 (GLFDKNAGENTFLREEIVY) are Cytoplasmic-facing. Residues 554–585 (PQKAYYYCAIIEDVILRFAWTIQISITSTTLL) form a discontinuously helical membrane-spanning segment. Arg570 lines the phosphate pocket. At 586-587 (PH) the chain is on the extracellular side. A helical transmembrane segment spans residues 588–626 (SGDIIATVFAPLEVFRRFVWNFFRLENEHLNNCGEFRAV). Residues Arg603 and Arg604 each contribute to the phosphate site. Topologically, residues 627 to 696 (RDISVAPLNA…IEDTDDEANT (70 aa)) are cytoplasmic. Residue Ser668 is modified to Phosphoserine. Residues 673-696 (RLASQSKARDTKVLIEDTDDEANT) are disordered. A Phosphothreonine modification is found at Thr690.

The protein belongs to the SYG1 (TC 2.A.94) family. In terms of assembly, homodimer. In terms of tissue distribution, widely expressed. Detected in spleen, lymph node, thymus, leukocytes, bone marrow, heart, kidney, pancreas and skeletal muscle.

The protein resides in the cell membrane. The catalysed reaction is phosphate(in) = phosphate(out). Its activity is regulated as follows. Allosterically activated by inositol hexakisphosphate (Ins6P). Inorganic ion transporter that mediates phosphate ion export across plasma membrane. Plays a major role in phosphate homeostasis, preventing intracellular phosphate accumulation and possible calcium phosphate precipitation, ultimately preserving calcium signaling. Binds inositol hexakisphosphate (Ins6P) and similar inositol polyphosphates, such as 5-diphospho-inositol pentakisphosphate (5-InsP7), which are important intracellular signaling molecules involved in regulation of phosphate flux. This chain is Solute carrier family 53 member 1, found in Homo sapiens (Human).